The following is a 195-amino-acid chain: Molybdenum cofactor guanylyltransferase (195 aa).

Residues 10-12 (LAG), Lys-23, Asn-51, Asp-69, and Asp-99 contribute to the GTP site. Asp-99 contributes to the Mg(2+) binding site.

The protein belongs to the MobA family. As to quaternary structure, monomer. It depends on Mg(2+) as a cofactor.

Its subcellular location is the cytoplasm. The catalysed reaction is Mo-molybdopterin + GTP + H(+) = Mo-molybdopterin guanine dinucleotide + diphosphate. Its function is as follows. Transfers a GMP moiety from GTP to Mo-molybdopterin (Mo-MPT) cofactor (Moco or molybdenum cofactor) to form Mo-molybdopterin guanine dinucleotide (Mo-MGD) cofactor. This Yersinia pseudotuberculosis serotype O:1b (strain IP 31758) protein is Molybdenum cofactor guanylyltransferase.